The sequence spans 587 residues: Polyadenylate-binding protein-interacting protein 3 (587 aa).

Residues 51 to 132 (LLVYFTTCNI…LVQVIAKDLP (82 aa)) form the Sm domain. A disordered region spans residues 422-503 (AKSENSSGWP…QSPQSPVFDG (82 aa)). Over residues 431 to 464 (PGSSISRNSENSAASSASNLPILSPSSSGSLSSE) the composition is skewed to low complexity. The PAM2-like 1; degenerate motif lies at 467-475 (TLNPNAKEF). Positions 476–486 (KLNPNAKSFKP) match the PAM2-like 2 motif. Residues 486-498 (PSPSATRPQSPQS) are compositionally biased toward polar residues.

The chain is Polyadenylate-binding protein-interacting protein 3 (CID3) from Arabidopsis thaliana (Mouse-ear cress).